A 610-amino-acid chain; its full sequence is MNIEDLKKRQEKIRNFSIIAHIDHGKSTLADRILEKTETVSSREMQAQLLDSMDLERERGITIKLNAIELNYTAKDGETYIFHLIDTPGHVDFTYEVSRSLAACEGAILVVDAAQGIEAQTLANVYLALDNDLEILPVINKIDLPAADPERVRAEVEDVIGLDASEAVLASAKAGIGIEEILEQIVEKVPAPTGEVDAPLQALIFDSVYDAYRGVILQVRIVNGMVKPGDKIQMMSNGKTFDVTEVGIFTPKAVGRDFLATGDVGYIAASIKTVADTRVGDTITLANNPAIEPLHGYKQMNPMVFAGLYPIESNKYNDLREALEKLQLNDASLQFEPETSQALGFGFRCGFLGLLHMDVIQERLEREFNIDLIMTAPSVVYHVNTTDGEMLEVSNPSEFPDPTRVDSIEEPYVKAQIMVPQEFVGAVMELAQRKRGDFVTMDYIDDNRVNVIYQIPLAEIVFDFFDKLKSSTRGYASFDYEISEYRRSQLVKMDILLNGDKVDALSFIVHKEFAYERGKLIVDKLKKIIPRQQFEVPIQAAIGQKIVARSDIKALRKNVLAKCYGGDVSRKRKLLEKQKAGKKRMKAIGSVEVPQEAFLSVLSMDDDDKK.

The 183-residue stretch at 11–193 folds into the tr-type G domain; sequence EKIRNFSIIA…QIVEKVPAPT (183 aa). Residues 23–28 and 140–143 each bind GTP; these read DHGKST and NKID.

It belongs to the TRAFAC class translation factor GTPase superfamily. Classic translation factor GTPase family. LepA subfamily.

The protein localises to the cell membrane. It catalyses the reaction GTP + H2O = GDP + phosphate + H(+). Functionally, required for accurate and efficient protein synthesis under certain stress conditions. May act as a fidelity factor of the translation reaction, by catalyzing a one-codon backward translocation of tRNAs on improperly translocated ribosomes. Back-translocation proceeds from a post-translocation (POST) complex to a pre-translocation (PRE) complex, thus giving elongation factor G a second chance to translocate the tRNAs correctly. Binds to ribosomes in a GTP-dependent manner. This Streptococcus agalactiae serotype Ia (strain ATCC 27591 / A909 / CDC SS700) protein is Elongation factor 4.